We begin with the raw amino-acid sequence, 162 residues long: Caveolin-2 (162 aa).

Over 1 to 86 (MGLETEKADV…FEISKYVIYK (86 aa)) the chain is Cytoplasmic. Tyr19 is subject to Phosphotyrosine; by SRC. A phosphoserine mark is found at Ser20 and Ser23. Tyr27 is subject to Phosphotyrosine; by SRC. Phosphoserine is present on Ser36. An intramembrane region (helical) is located at residues 87–107 (FLTVFLAIPLAFAAGIIFATL). The Cytoplasmic segment spans residues 108 to 162 (SCLHIWIIMPFVKTCLMVLPSVQTIWRSVTDAVIAPLCTSVGRVFSSVSLQLSRD).

Belongs to the caveolin family. Monomer or homodimer. Interacts with CAV1; the interaction forms a stable heterooligomeric complex that is required for targeting to lipid rafts and for caveolae formation. Tyrosine phosphorylated forms do not form heterooligomers with the Tyr-19-phosphorylated form existing as a monomer or dimer, and the Tyr-27-form as a monomer only. Interacts (tyrosine phosphorylated form) with the SH2 domain-containing proteins, RASA1, NCK1 and SRC. Interacts (tyrosine phosphorylated form) with INSR, the interaction (Tyr-27-phosphorylated form) is increased on insulin stimulation. Interacts (Tyr-19 phosphorylated form) with MAPK1 (phosphorylated form); the interaction, promoted by insulin, leads to nuclear location and MAPK1 activation. Interacts with STAT3; the interaction is increased on insulin-induced tyrosine phosphorylation leading to STAT activation. In terms of processing, phosphorylated on serine and tyrosine residues. CAV1 promotes phosphorylation on Ser-23 which then targets the complex to the plasma membrane, lipid rafts and caveolae. Phosphorylation on Ser-36 appears to modulate mitosis in endothelial cells. Phosphorylation on both Tyr-19 and Tyr-27 is required for insulin-induced 'Ser-727' phosphorylation of STAT3 and its activation. Phosphorylation on Tyr-19 is required for insulin-induced phosphorylation of MAPK1 and DNA binding of STAT3. Tyrosine phosphorylation is induced by both EGF and insulin (By. similarity).

The protein localises to the nucleus. Its subcellular location is the cytoplasm. It localises to the golgi apparatus membrane. It is found in the cell membrane. The protein resides in the membrane. The protein localises to the caveola. Its function is as follows. May act as a scaffolding protein within caveolar membranes. Interacts directly with G-protein alpha subunits and can functionally regulate their activity. Acts as an accessory protein in conjunction with CAV1 in targeting to lipid rafts and driving caveolae formation. The Ser-36 phosphorylated form has a role in modulating mitosis in endothelial cells. Positive regulator of cellular mitogenesis of the MAPK signaling pathway. Required for the insulin-stimulated nuclear translocation and activation of MAPK1 and STAT3, and the subsequent regulation of cell cycle progression. In Carollia perspicillata (Seba's short-tailed bat), this protein is Caveolin-2 (CAV2).